The following is a 115-amino-acid chain: Nucleoid-associated protein alr5067 (115 aa).

The protein belongs to the YbaB/EbfC family. As to quaternary structure, homodimer.

The protein resides in the cytoplasm. It localises to the nucleoid. Functionally, binds to DNA and alters its conformation. May be involved in regulation of gene expression, nucleoid organization and DNA protection. The sequence is that of Nucleoid-associated protein alr5067 from Nostoc sp. (strain PCC 7120 / SAG 25.82 / UTEX 2576).